Reading from the N-terminus, the 704-residue chain is DNA ligase (704 aa).

NAD(+)-binding positions include 58–62, 107–108, and Glu-138; these read DYEYD and SL. The N6-AMP-lysine intermediate role is filled by Lys-140. The NAD(+) site is built by Arg-161, Glu-199, Lys-323, and Lys-347. 4 residues coordinate Zn(2+): Cys-441, Cys-444, Cys-459, and Cys-464. The region spanning 621–704 is the BRCT domain; that stretch reads EKKGKLAGLN…LKLIGGENTE (84 aa).

It belongs to the NAD-dependent DNA ligase family. LigA subfamily. It depends on Mg(2+) as a cofactor. Requires Mn(2+) as cofactor.

The catalysed reaction is NAD(+) + (deoxyribonucleotide)n-3'-hydroxyl + 5'-phospho-(deoxyribonucleotide)m = (deoxyribonucleotide)n+m + AMP + beta-nicotinamide D-nucleotide.. DNA ligase that catalyzes the formation of phosphodiester linkages between 5'-phosphoryl and 3'-hydroxyl groups in double-stranded DNA using NAD as a coenzyme and as the energy source for the reaction. It is essential for DNA replication and repair of damaged DNA. This is DNA ligase from Sulfurihydrogenibium sp. (strain YO3AOP1).